Here is a 316-residue protein sequence, read N- to C-terminus: GTPase Era (316 aa).

The 182-residue stretch at 9 to 190 folds into the Era-type G domain; it reads RAGFAAIIGA…TAKLVSMMPE (182 aa). The tract at residues 17–24 is G1; sequence GAPNAGKS. 17 to 24 contributes to the GTP binding site; it reads GAPNAGKS. Positions 43–47 are G2; it reads QTTRF. The interval 64-67 is G3; that stretch reads DTPG. Residues 64–68 and 140–143 each bind GTP; these read DTPGI and NKID. Residues 140-143 are G4; that stretch reads NKID. The tract at residues 169-171 is G5; the sequence is ISA. The KH type-2 domain maps to 221 to 298; it reads VHEELPYAAT…HLFLHVKVKE (78 aa).

The protein belongs to the TRAFAC class TrmE-Era-EngA-EngB-Septin-like GTPase superfamily. Era GTPase family. In terms of assembly, monomer.

The protein localises to the cytoplasm. Its subcellular location is the cell inner membrane. An essential GTPase that binds both GDP and GTP, with rapid nucleotide exchange. Plays a role in 16S rRNA processing and 30S ribosomal subunit biogenesis and possibly also in cell cycle regulation and energy metabolism. This Caulobacter vibrioides (strain ATCC 19089 / CIP 103742 / CB 15) (Caulobacter crescentus) protein is GTPase Era.